Consider the following 219-residue polypeptide: Cytidylate kinase (219 aa).

21–29 (GPAASGKGT) is a binding site for ATP.

It belongs to the cytidylate kinase family. Type 1 subfamily.

It is found in the cytoplasm. The catalysed reaction is CMP + ATP = CDP + ADP. It catalyses the reaction dCMP + ATP = dCDP + ADP. The polypeptide is Cytidylate kinase (Rickettsia typhi (strain ATCC VR-144 / Wilmington)).